We begin with the raw amino-acid sequence, 744 residues long: 3-isopropylmalate dehydratase (744 aa).

3 residues coordinate [4Fe-4S] cluster: cysteine 341, cysteine 401, and cysteine 404.

This sequence belongs to the aconitase/IPM isomerase family. In terms of assembly, monomer. The cofactor is [4Fe-4S] cluster.

It carries out the reaction (2R,3S)-3-isopropylmalate = (2S)-2-isopropylmalate. The protein operates within amino-acid biosynthesis; L-leucine biosynthesis; L-leucine from 3-methyl-2-oxobutanoate: step 2/4. Catalyzes the isomerization between 2-isopropylmalate and 3-isopropylmalate, via the formation of 2-isopropylmaleate. This is 3-isopropylmalate dehydratase (leu1) from Phycomyces blakesleeanus (strain ATCC 8743b / DSM 1359 / FGSC 10004 / NBRC 33097 / NRRL 1555).